A 619-amino-acid chain; its full sequence is tRNA (guanine(37)-N(1))-methyltransferase 2 (619 aa).

A mitochondrion-targeting transit peptide spans 1–10; sequence MVSKLSLFRA. S-adenosyl-L-methionine-binding positions include Arg-434, 472-473, 500-501, and Asn-523; these read DL and DG.

Belongs to the class I-like SAM-binding methyltransferase superfamily. TRM5/TYW2 family. Monomer.

The protein resides in the mitochondrion matrix. It localises to the nucleus. The protein localises to the cytoplasm. It catalyses the reaction guanosine(37) in tRNA + S-adenosyl-L-methionine = N(1)-methylguanosine(37) in tRNA + S-adenosyl-L-homocysteine + H(+). In terms of biological role, specifically methylates the N1 position of guanosine-37 in various cytoplasmic and mitochondrial tRNAs. Methylation is not dependent on the nature of the nucleoside 5' of the target nucleoside. This is the first step in the biosynthesis of wybutosine (yW), a modified base adjacent to the anticodon of tRNAs and required for accurate decoding. This Arabidopsis thaliana (Mouse-ear cress) protein is tRNA (guanine(37)-N(1))-methyltransferase 2.